The primary structure comprises 838 residues: Outer membrane usher protein YraJ (838 aa).

A signal peptide spans 1–40; the sequence is MPQRHHQGHKRTPKQLALIIKRCLPMVLTGSGMLCTTANA. Residues Cys815 and Cys837 are joined by a disulfide bond.

The protein belongs to the fimbrial export usher family.

It is found in the cell outer membrane. Part of the yraHIJK fimbrial operon. Could contribute to adhesion to various surfaces in specific environmental niches. Increases adhesion to eukaryotic T24 bladder epithelial cells in the absence of fim operon. Probably involved in the export and assembly of fimbrial subunits across the outer membrane. The protein is Outer membrane usher protein YraJ (yraJ) of Escherichia coli (strain K12).